A 1588-amino-acid chain; its full sequence is Paternally-expressed gene 3 protein (1588 aa).

In terms of domain architecture, SCAN box spans 46 to 128 (HQRFRNLIYV…TLLENYKEMY (83 aa)). Disordered stretches follow at residues 128–230 (YQPE…ESYQ), 266–306 (DGHS…RRGI), and 319–349 (KFIK…MSDD). Residues 129-142 (QPEDDNNSDVTSDD) show a composition bias toward acidic residues. 4 stretches are compositionally biased toward basic and acidic residues: residues 143-152 (DMTRNRRESS), 161-182 (SGDR…DRWS), 206-225 (FEMD…RSQD), and 295-306 (PEAKKSTHRRGI). 3 C2H2-type zinc fingers span residues 454–476 (YVCD…QIMH), 507–529 (FECK…RKIH), and 565–587 (YECR…QKIH). Over residues 588-607 (FGDDKDNEREHERERERGET) the composition is skewed to basic and acidic residues. Residues 588–610 (FGDDKDNEREHERERERGETFRP) are disordered. Residues 627 to 649 (YECKVCGETFLHSSSLKEHQKIH) form a C2H2-type 4 zinc finger. The tract at residues 838–930 (LVASKPPRSH…EFSVPSSNVR (93 aa)) is disordered. Over residues 868–881 (LNDKRQKIPARENP) the composition is skewed to basic and acidic residues. The C2H2-type 5 zinc-finger motif lies at 969 to 991 (YECQECGECFAHSSDLTEHQKIH). A disordered region spans residues 1056 to 1104 (EKSHGEESQGENTDGEETHSEETHGQETIEDPVIQGSDMEDPQKDDPDD). Residues 1071–1082 (EETHSEETHGQE) are compositionally biased toward basic and acidic residues. 5 consecutive C2H2-type zinc fingers follow at residues 1107 to 1129 (YECE…QKVH), 1163 to 1185 (YECP…QRIH), 1225 to 1247 (IRCL…MRLH), 1282 to 1304 (FECA…VTVH), and 1332 to 1354 (YECK…KELH). Residues 1395–1415 (AEPEVEAAEPEVEAAEPEVEA) are compositionally biased toward acidic residues. A disordered region spans residues 1395-1495 (AEPEVEAAEP…GIEDPEEGED (101 aa)). Repeat copies occupy residues 1397–1403 (PEVEAAE), 1404–1410 (PEVEAAE), 1411–1417 (PEVEAAE), 1418–1422 (PNGEA), 1425–1429 (PDGEA), 1432–1436 (PIGEA), and 1439–1443 (PNGEA). Positions 1397-1417 (PEVEAAEPEVEAAEPEVEAAE) are 3 X 7 AA repeat of P-E-V-E-A-A-E. Residues 1418-1443 (PNGEAEGPDGEAAEPIGEAGQPNGEA) are 4 X 5 AA repeat of P-X-G-E-A. 2 stretches are compositionally biased toward acidic residues: residues 1449 to 1466 (DADE…ERAE) and 1475 to 1495 (PEGD…EGED). 2 C2H2-type zinc fingers span residues 1505 to 1527 (YDCH…LKTH) and 1564 to 1586 (FKCD…QNTH).

It belongs to the krueppel C2H2-type zinc-finger protein family. As to quaternary structure, homodimer. Interacts with SIAH1A and SIAH2. Interacts with TRAF2.

It localises to the nucleus. The protein localises to the cytoplasm. Its function is as follows. Induces apoptosis in cooperation with SIAH1A. Acts as a mediator between p53/TP53 and BAX in a neuronal death pathway that is activated by DNA damage. Acts synergistically with TRAF2 and inhibits TNF induced apoptosis through activation of NF-kappa-B. The sequence is that of Paternally-expressed gene 3 protein (PEG3) from Pan troglodytes (Chimpanzee).